A 1053-amino-acid polypeptide reads, in one-letter code: Sal-like protein 4 (1053 aa).

Residues 1 to 62 (MSRRKQAKPQ…DEVASEDEAT (62 aa)) are disordered. Over residues 20-46 (EQQPQQQTPEFADAAPAAPAAGELGAP) the composition is skewed to low complexity. Ser-57 carries the phosphoserine modification. Residues 72 to 94 (HVCEKCCAEFFSISEFLEHKKNC) form a C2H2-type 1; atypical zinc finger. Positions 116–149 (SGAVLSHQPTSPGSKDCHRENGGSSEDMKEKPDA) are disordered. Positions 130-149 (KDCHRENGGSSEDMKEKPDA) are enriched in basic and acidic residues. Residue Lys-156 forms a Glycyl lysine isopeptide (Lys-Gly) (interchain with G-Cter in SUMO1); alternate linkage. A Glycyl lysine isopeptide (Lys-Gly) (interchain with G-Cter in SUMO2); alternate cross-link involves residue Lys-156. Glycyl lysine isopeptide (Lys-Gly) (interchain with G-Cter in SUMO2) cross-links involve residues Lys-175, Lys-190, and Lys-290. Residue Ser-307 is modified to Phosphoserine. A Glycyl lysine isopeptide (Lys-Gly) (interchain with G-Cter in SUMO1); alternate cross-link involves residue Lys-316. Residue Lys-316 forms a Glycyl lysine isopeptide (Lys-Gly) (interchain with G-Cter in SUMO2); alternate linkage. Lys-372 participates in a covalent cross-link: Glycyl lysine isopeptide (Lys-Gly) (interchain with G-Cter in SUMO2). Lys-374 is covalently cross-linked (Glycyl lysine isopeptide (Lys-Gly) (interchain with G-Cter in SUMO1); alternate). Lys-374 participates in a covalent cross-link: Glycyl lysine isopeptide (Lys-Gly) (interchain with G-Cter in SUMO2); alternate. 2 consecutive C2H2-type zinc fingers follow at residues 382-404 (HKCK…LRSH) and 410-432 (FVCS…FHRH). Lys-436 participates in a covalent cross-link: Glycyl lysine isopeptide (Lys-Gly) (interchain with G-Cter in SUMO2). Over residues 483 to 496 (VGLPQNLSSGTNPK) the composition is skewed to polar residues. The disordered stretch occupies residues 483–546 (VGLPQNLSSG…QGSGTPEPGS (64 aa)). A Phosphothreonine modification is found at Thr-541. Lys-550 is covalently cross-linked (Glycyl lysine isopeptide (Lys-Gly) (interchain with G-Cter in SUMO2)). C2H2-type zinc fingers lie at residues 566–588 (NECL…YRTH) and 594–616 (FQCK…LGVH). Residues Lys-597 and Lys-623 each participate in a glycyl lysine isopeptide (Lys-Gly) (interchain with G-Cter in SUMO2) cross-link. The C2H2-type 6 zinc-finger motif lies at 626–648 (HSCPICQKKFTNAVMLQQHIRMH). Disordered stretches follow at residues 694–714 (EEVS…PLPS), 736–776 (VGPA…QSRS), and 788–828 (LSPA…LPST). Low complexity predominate over residues 698–708 (SQEAPSSSSKV). Polar residues-rich tracts occupy residues 743–776 (LQRQ…QSRS) and 788–797 (LSPANSQAES). Ser-776 and Ser-789 each carry phosphoserine. Over residues 810–821 (ESSENSRTEMEG) the composition is skewed to basic and acidic residues. Lys-838 is covalently cross-linked (Glycyl lysine isopeptide (Lys-Gly) (interchain with G-Cter in SUMO1); alternate). Residue Lys-838 forms a Glycyl lysine isopeptide (Lys-Gly) (interchain with G-Cter in SUMO2); alternate linkage. Ser-852 bears the Phosphoserine mark. Residues 870–892 (HGCTRCGKNFSSASALQIHERTH) form a C2H2-type 7 zinc finger. Lys-896 is covalently cross-linked (Glycyl lysine isopeptide (Lys-Gly) (interchain with G-Cter in SUMO2)). Residues 898–920 (FVCNICGRAFTTKGNLKVHYMTH) form a C2H2-type 8 zinc finger. Residues Lys-932 and Lys-947 each participate in a glycyl lysine isopeptide (Lys-Gly) (interchain with G-Cter in SUMO2) cross-link. Residues 1018-1039 (GSQSGISADVEKPSATDGVPKH) form a disordered region. Ser-1019 bears the Phosphoserine mark.

Belongs to the sal C2H2-type zinc-finger protein family. In terms of assembly, interacts with POU5F1/OCT4. Interacts with NANOG. Interacts with BEND3. Interacts with NSD2 (via PHD-type zinc fingers 1, 2 and 3). Interacts with NRBP1. Isoform SALL4B exists primarily as a ubiquitinated form. In terms of processing, sumoylation with both SUMO1 and SUMO2 regulates the stability, subcellular localization, transcriptional activity, and may reduce interaction with POU5F1/OCT4. In terms of tissue distribution, expressed in testis. Constitutively expressed in acute myeloid leukemia (AML).

The protein resides in the cytoplasm. The protein localises to the nucleus. Transcription factor with a key role in the maintenance and self-renewal of embryonic and hematopoietic stem cells. The sequence is that of Sal-like protein 4 (SALL4) from Homo sapiens (Human).